The following is a 522-amino-acid chain: Glucans biosynthesis protein G (522 aa).

Residues 1–33 form the signal peptide; it reads MLDNKFGFKQRVASLRWLSAAIMLSVSAVPAWA.

It belongs to the OpgD/OpgG family.

The protein resides in the periplasm. It participates in glycan metabolism; osmoregulated periplasmic glucan (OPG) biosynthesis. Functionally, involved in the biosynthesis of osmoregulated periplasmic glucans (OPGs). The polypeptide is Glucans biosynthesis protein G (Pectobacterium atrosepticum (strain SCRI 1043 / ATCC BAA-672) (Erwinia carotovora subsp. atroseptica)).